A 297-amino-acid polypeptide reads, in one-letter code: uncharacterized protein (297 aa).

Residues 1–60 (MNIELRHLRYFVAVAEELHFGRAAARLNISQPPLSQQIQALEQQIGARLLARTNRSVLLT) enclose the HTH lysR-type domain. Positions 20 to 40 (FGRAAARLNISQPPLSQQIQA) form a DNA-binding region, H-T-H motif.

The protein belongs to the LysR transcriptional regulatory family.

This is an uncharacterized protein from Escherichia coli (strain K12).